The following is a 427-amino-acid chain: Glutamate-1-semialdehyde 2,1-aminomutase (427 aa).

Lysine 265 bears the N6-(pyridoxal phosphate)lysine mark.

The protein belongs to the class-III pyridoxal-phosphate-dependent aminotransferase family. HemL subfamily. As to quaternary structure, homodimer. Requires pyridoxal 5'-phosphate as cofactor.

Its subcellular location is the cytoplasm. It carries out the reaction (S)-4-amino-5-oxopentanoate = 5-aminolevulinate. It functions in the pathway porphyrin-containing compound metabolism; protoporphyrin-IX biosynthesis; 5-aminolevulinate from L-glutamyl-tRNA(Glu): step 2/2. This is Glutamate-1-semialdehyde 2,1-aminomutase from Burkholderia pseudomallei (strain 1710b).